The sequence spans 240 residues: T4 protein (240 aa).

The protein belongs to the poxviruses B9 family.

This chain is T4 protein, found in Sheeppox virus (strain InS-1) (SPPV).